We begin with the raw amino-acid sequence, 311 residues long: Glutaminase (311 aa).

S66, N116, E162, N169, Y193, Y245, and V263 together coordinate substrate.

Belongs to the glutaminase family. Homotetramer.

It catalyses the reaction L-glutamine + H2O = L-glutamate + NH4(+). This chain is Glutaminase, found in Rhodopseudomonas palustris (strain ATCC BAA-98 / CGA009).